The primary structure comprises 419 residues: AT-hook motif nuclear-localized protein 4 (419 aa).

Disordered regions lie at residues 1-168 (MEER…SGGG), 301-337 (QQQQ…DPKA), and 382-419 (DLFS…EVPS). The Bipartite nuclear localization signal signature appears at 78–86 (KKKRGRPRK). Residues 78-90 (KKKRGRPRKYNPD) constitute a DNA-binding region (a.T hook). Residues 101–112 (PISSSVPLTSEF) are compositionally biased toward polar residues. Residues 115–130 (RKRGRGRGRGRGRGRG) show a composition bias toward basic residues. Positions 136-148 (GSREPNNNNNDNN) are enriched in low complexity. Residues 174-314 (VSPSFTPHVL…QQIKKQRRER (141 aa)) form the PPC domain. Polar residues predominate over residues 318 to 328 (PTTTQASNISF). Residues 391–406 (DREEDEDDLEGEDDEE) show a composition bias toward acidic residues.

In terms of assembly, homodimer. Interacts with AHL3. In terms of tissue distribution, predominantly expressed in the stele of the root meristem with a specificity to the procambium.

Its subcellular location is the nucleus. Its function is as follows. Transcription factor that specifically binds AT-rich DNA sequences related to the nuclear matrix attachment regions (MARs). Acts redundantly with AHL3 to regulate the formation of tissue boundary between the xylem and procambium in the root meristem. Cell-to-cell movement of AHL4 from the procambium to the xylem is critical for its function in root vascular patterning. In Arabidopsis thaliana (Mouse-ear cress), this protein is AT-hook motif nuclear-localized protein 4.